A 227-amino-acid chain; its full sequence is Isopentenyl-diphosphate Delta-isomerase 1 (227 aa).

Residue Lys36 participates in substrate binding. The Mg(2+) site is built by His40 and His51. A Nudix hydrolase domain is found at 49–199 (LLHRAFSVFL…EIKITPWFKI (151 aa)). Substrate is bound by residues Arg70 and Lys74. Cys86 is an active-site residue. A substrate-binding site is contributed by Ser87. The Mg(2+) site is built by Glu146 and Glu148. Glu148 is an active-site residue. Lys176 carries the N6-acetyllysine modification. A Microbody targeting signal motif is present at residues 225–227 (YRI).

It belongs to the IPP isomerase type 1 family. In terms of assembly, monomer. Mg(2+) serves as cofactor.

The protein resides in the peroxisome. It carries out the reaction isopentenyl diphosphate = dimethylallyl diphosphate. It functions in the pathway isoprenoid biosynthesis; dimethylallyl diphosphate biosynthesis; dimethylallyl diphosphate from isopentenyl diphosphate: step 1/1. In terms of biological role, catalyzes the 1,3-allylic rearrangement of the homoallylic substrate isopentenyl (IPP) to its highly electrophilic allylic isomer, dimethylallyl diphosphate (DMAPP). The sequence is that of Isopentenyl-diphosphate Delta-isomerase 1 (IDI1) from Pongo abelii (Sumatran orangutan).